Here is a 242-residue protein sequence, read N- to C-terminus: Probable transcriptional regulatory protein XAC3151 (242 aa).

It belongs to the TACO1 family.

Its subcellular location is the cytoplasm. This is Probable transcriptional regulatory protein XAC3151 from Xanthomonas axonopodis pv. citri (strain 306).